A 105-amino-acid chain; its full sequence is Large ribosomal subunit protein uL24 (105 aa).

The protein belongs to the universal ribosomal protein uL24 family. In terms of assembly, part of the 50S ribosomal subunit.

Functionally, one of two assembly initiator proteins, it binds directly to the 5'-end of the 23S rRNA, where it nucleates assembly of the 50S subunit. In terms of biological role, one of the proteins that surrounds the polypeptide exit tunnel on the outside of the subunit. This chain is Large ribosomal subunit protein uL24, found in Aromatoleum aromaticum (strain DSM 19018 / LMG 30748 / EbN1) (Azoarcus sp. (strain EbN1)).